The primary structure comprises 383 residues: 8-amino-7-oxononanoate synthase (383 aa).

Residue arginine 21 coordinates substrate. 108-109 (GF) is a binding site for pyridoxal 5'-phosphate. Residue histidine 133 participates in substrate binding. Positions 179, 207, and 233 each coordinate pyridoxal 5'-phosphate. At lysine 236 the chain carries N6-(pyridoxal phosphate)lysine. Threonine 350 contributes to the substrate binding site.

Belongs to the class-II pyridoxal-phosphate-dependent aminotransferase family. BioF subfamily. As to quaternary structure, homodimer. The cofactor is pyridoxal 5'-phosphate.

It carries out the reaction 6-carboxyhexanoyl-[ACP] + L-alanine + H(+) = (8S)-8-amino-7-oxononanoate + holo-[ACP] + CO2. It participates in cofactor biosynthesis; biotin biosynthesis. In terms of biological role, catalyzes the decarboxylative condensation of pimeloyl-[acyl-carrier protein] and L-alanine to produce 8-amino-7-oxononanoate (AON), [acyl-carrier protein], and carbon dioxide. In Yersinia enterocolitica serotype O:8 / biotype 1B (strain NCTC 13174 / 8081), this protein is 8-amino-7-oxononanoate synthase.